The following is a 116-amino-acid chain: Large ribosomal subunit protein bL17 (116 aa).

Belongs to the bacterial ribosomal protein bL17 family. In terms of assembly, part of the 50S ribosomal subunit. Contacts protein L32.

In Synechococcus elongatus (strain ATCC 33912 / PCC 7942 / FACHB-805) (Anacystis nidulans R2), this protein is Large ribosomal subunit protein bL17.